We begin with the raw amino-acid sequence, 187 residues long: Large ribosomal subunit protein bL21 (187 aa).

The disordered stretch occupies residues 157–187; sequence KVAKKAVKKTVKKATKTGAKKKAAKKTSKKA.

This sequence belongs to the bacterial ribosomal protein bL21 family. As to quaternary structure, part of the 50S ribosomal subunit. Contacts protein L20.

Functionally, this protein binds to 23S rRNA in the presence of protein L20. The chain is Large ribosomal subunit protein bL21 from Bdellovibrio bacteriovorus (strain ATCC 15356 / DSM 50701 / NCIMB 9529 / HD100).